We begin with the raw amino-acid sequence, 372 residues long: NAD(P)H-quinone oxidoreductase subunit 1 (372 aa).

8 helical membrane-spanning segments follow: residues 27–47 (VLWM…GVLV), 97–117 (FLFT…YLIV), 128–148 (VGAG…GLLM), 176–196 (LALA…IDIV), 204–224 (ILGW…IAAL), 254–274 (FALF…LVSI), 308–328 (ALGI…AILL), and 347–367 (FLLP…LTFP).

The protein belongs to the complex I subunit 1 family. As to quaternary structure, NDH-1 is composed of at least 11 different subunits.

It is found in the cellular thylakoid membrane. It catalyses the reaction a plastoquinone + NADH + (n+1) H(+)(in) = a plastoquinol + NAD(+) + n H(+)(out). It carries out the reaction a plastoquinone + NADPH + (n+1) H(+)(in) = a plastoquinol + NADP(+) + n H(+)(out). In terms of biological role, NDH-1 shuttles electrons from an unknown electron donor, via FMN and iron-sulfur (Fe-S) centers, to quinones in the respiratory and/or the photosynthetic chain. The immediate electron acceptor for the enzyme in this species is believed to be plastoquinone. Couples the redox reaction to proton translocation, and thus conserves the redox energy in a proton gradient. This is NAD(P)H-quinone oxidoreductase subunit 1 from Synechococcus elongatus (strain ATCC 33912 / PCC 7942 / FACHB-805) (Anacystis nidulans R2).